We begin with the raw amino-acid sequence, 247 residues long: Ribonuclease 3 (247 aa).

The RNase III domain occupies 21 to 149 (VDHQPLLDHL…LFGAIFRQHG (129 aa)). Glu62 contacts Mg(2+). The active site involves Asp66. Residues Asp135 and Glu138 each contribute to the Mg(2+) site. The active site involves Glu138. Residues 176-244 (DWKTTLQEEL…AHQAFRKLRE (69 aa)) enclose the DRBM domain.

It belongs to the ribonuclease III family. In terms of assembly, homodimer. Requires Mg(2+) as cofactor.

It is found in the cytoplasm. The catalysed reaction is Endonucleolytic cleavage to 5'-phosphomonoester.. Its function is as follows. Digests double-stranded RNA. Involved in the processing of primary rRNA transcript to yield the immediate precursors to the large and small rRNAs (23S and 16S). Processes some mRNAs, and tRNAs when they are encoded in the rRNA operon. Processes pre-crRNA and tracrRNA of type II CRISPR loci if present in the organism. This chain is Ribonuclease 3, found in Corynebacterium glutamicum (strain ATCC 13032 / DSM 20300 / JCM 1318 / BCRC 11384 / CCUG 27702 / LMG 3730 / NBRC 12168 / NCIMB 10025 / NRRL B-2784 / 534).